Consider the following 465-residue polypeptide: Dihydrolipoyl dehydrogenase (465 aa).

Residues 34 to 42 (EKREAGGTC), lysine 51, and glycine 114 contribute to the FAD site. A disulfide bond links cysteine 42 and cysteine 47. NAD(+)-binding positions include 180–184 (GGGVI), glutamate 203, valine 237, and 264–267 (SIGR). FAD contacts are provided by aspartate 307 and alanine 315. Histidine 439 functions as the Proton acceptor in the catalytic mechanism.

It belongs to the class-I pyridine nucleotide-disulfide oxidoreductase family. The cofactor is FAD.

The protein localises to the cytoplasm. The enzyme catalyses N(6)-[(R)-dihydrolipoyl]-L-lysyl-[protein] + NAD(+) = N(6)-[(R)-lipoyl]-L-lysyl-[protein] + NADH + H(+). In terms of biological role, the branched-chain alpha-keto dehydrogenase complex catalyzes the overall conversion of alpha-keto acids to acyl-CoA and CO(2). It contains multiple copies of 3 enzymatic components: branched-chain alpha-keto acid decarboxylase (E1), lipoamide acyltransferase (E2) and lipoamide dehydrogenase (E3). The sequence is that of Dihydrolipoyl dehydrogenase (lpdA) from Chlamydia trachomatis serovar D (strain ATCC VR-885 / DSM 19411 / UW-3/Cx).